The sequence spans 338 residues: Palmitoyltransferase ZDHHC15 (338 aa).

Residues 1 to 20 are Cytoplasmic-facing; the sequence is MLAGCRVALPRGLRCCQRVL. Residues 21-41 form a helical membrane-spanning segment; sequence SWVPVVIISLVVLWSYYAYVW. Topologically, residues 42–56 are lumenal; it reads ELCLVTVTNPAEKAA. A helical membrane pass occupies residues 57-77; that stretch reads YLLIFHTVFLLFIWTYWKAIF. The Cytoplasmic portion of the chain corresponds to 78–172; the sequence is TPPKQPTKKF…NNCIGYSNYK (95 aa). The DHHC domain occupies 129-179; that stretch reads RFCDTCQMVKPDRCHHCSVCGMCVLKMDHHCPWVNNCIGYSNYKFFLLFLA. 7 residues coordinate Zn(2+): cysteine 131, cysteine 134, histidine 144, cysteine 145, cysteine 148, cysteine 151, and histidine 158. The S-palmitoyl cysteine intermediate role is filled by cysteine 159. Cysteine 165 serves as a coordination point for Zn(2+). Residues 173-193 traverse the membrane as a helical segment; sequence FFLLFLAYAMLYCLYIGCTVF. Residues 194 to 210 are Lumenal-facing; it reads QYFILYWTDTLSNGRAK. A helical membrane pass occupies residues 211-234; that stretch reads FHVLFLLFVALMFFISLMFLFGYH. Topologically, residues 235–338 are cytoplasmic; the sequence is CWLVSLNRTT…TSHITVHIEK (104 aa).

It belongs to the DHHC palmitoyltransferase family. Autopalmitoylated (in vitro).

The protein resides in the golgi apparatus membrane. Its subcellular location is the postsynaptic density. The catalysed reaction is L-cysteinyl-[protein] + hexadecanoyl-CoA = S-hexadecanoyl-L-cysteinyl-[protein] + CoA. It carries out the reaction L-cysteinyl-[protein] + tetradecanoyl-CoA = S-tetradecanoyl-L-cysteinyl-[protein] + CoA. The enzyme catalyses L-cysteinyl-[protein] + octadecanoyl-CoA = S-octadecanoyl-L-cysteinyl-[protein] + CoA. In terms of biological role, palmitoyltransferase that catalyzes the addition of palmitate onto various protein substrates. Has no stringent fatty acid selectivity and in addition to palmitate can also transfer onto target proteins myristate from tetradecanoyl-CoA and stearate from octadecanoyl-CoA. May thereby regulate target proteins association and localization to membranes. In the nervous system, probably catalyzes the palmitoylation of synaptic proteins and is involved in the differentiation of dopaminergic neurons and the development of the diencephalon. The chain is Palmitoyltransferase ZDHHC15 (zdhhc15) from Xenopus laevis (African clawed frog).